Here is a 373-residue protein sequence, read N- to C-terminus: Histidinol-phosphate aminotransferase (373 aa).

Lys229 bears the N6-(pyridoxal phosphate)lysine mark.

The protein belongs to the class-II pyridoxal-phosphate-dependent aminotransferase family. Histidinol-phosphate aminotransferase subfamily. It depends on pyridoxal 5'-phosphate as a cofactor.

The catalysed reaction is L-histidinol phosphate + 2-oxoglutarate = 3-(imidazol-4-yl)-2-oxopropyl phosphate + L-glutamate. It functions in the pathway amino-acid biosynthesis; L-histidine biosynthesis; L-histidine from 5-phospho-alpha-D-ribose 1-diphosphate: step 7/9. The protein is Histidinol-phosphate aminotransferase (hisC) of Methanothermobacter thermautotrophicus (strain ATCC 29096 / DSM 1053 / JCM 10044 / NBRC 100330 / Delta H) (Methanobacterium thermoautotrophicum).